The following is a 1084-amino-acid chain: Putative tRNA-specific 2-thiouridylase (1084 aa).

Helical transmembrane passes span 1–21, 32–52, and 309–329; these read MLIF…FILT, FIIS…FYVI, and IITI…YLIL. The active-site Nucleophile is C538. C538 and C715 form a disulfide bridge. Catalysis depends on C715, which acts as the Cysteine persulfide intermediate.

The protein belongs to the MnmA/TRMU family.

It is found in the plastid. The protein resides in the apicoplast. Its subcellular location is the membrane. The enzyme catalyses S-sulfanyl-L-cysteinyl-[protein] + uridine(34) in tRNA + AH2 + ATP = 2-thiouridine(34) in tRNA + L-cysteinyl-[protein] + A + AMP + diphosphate + H(+). Catalyzes the 2-thiolation of uridine at the wobble position (U34) of tRNA, leading to the formation of s(2)U34. Required for apicoplast maintenance. This chain is Putative tRNA-specific 2-thiouridylase, found in Plasmodium falciparum (isolate 3D7).